Here is a 174-residue protein sequence, read N- to C-terminus: Variant surface antigen F (174 aa).

The signal sequence occupies residues 1 to 29 (MKKSIFSKKLLFSFGSLVALAAIPLITIS). A lipid anchor (N-palmitoyl cysteine) is attached at Cys30. Cys30 is lipidated: S-diacylglycerol cysteine. Positions 32–174 (QTNTDQSQQP…PEQGNSQVSK (143 aa)) are disordered. Positions 43–53 (SGSGSGSGTSN) are enriched in gly residues. 9 consecutive repeat copies span residues 55–67 (SGSTPTPEQGNNQ), 68–80 (GGSTPTPEQGNNQ), 81–93 (GGSTPTPEQGNNQ), 94–106 (GGSTPTPEQGNNQ), 107–119 (GGSTPTPEQGNNQ), 120–132 (GGSTPTPEQGNNQ), 133–145 (GGSTPTPEQGNNQ), 146–158 (GGSTPTPEQGNNQ), and 159–171 (GGSTPTPEQGNSQ). Residues 55–171 (SGSTPTPEQG…TPTPEQGNSQ (117 aa)) are 9 X 13 AA tandem repeats. Residues 62 to 174 (EQGNNQGGST…PEQGNSQVSK (113 aa)) show a composition bias toward polar residues.

Its subcellular location is the cell membrane. Functionally, responsible for the antigenic diversity for host adaptation. Expression in E.coli of a construct containing vlpD, vlpE, and vlpF yields antigenically distinguishable products corresponding to each gene. This chain is Variant surface antigen F (vlpF), found in Mesomycoplasma hyorhinis (Mycoplasma hyorhinis).